We begin with the raw amino-acid sequence, 473 residues long: Nuclear distribution protein PAC1 (473 aa).

A LisH domain is found at 9 to 41 (QAEELHKSIIAYFLSAKLPKSAAALREEIADSV). Residues 60–87 (TSVVRLQKKIMDLEARNSALQSELDSAT) are a coiled coil. A compositionally biased stretch (polar residues) spans 80-93 (QSELDSATPTSLSR). A disordered region spans residues 80–99 (QSELDSATPTSLSRRNQDPV). WD repeat units follow at residues 113–154 (SHRN…RTIK), 156–196 (HTRA…KNIR), 200–247 (GHDH…CVRT), 250–289 (GHVE…TKST), 292–352 (GHEH…IKTL), 354–393 (GHDN…KCVR), 397–434 (DAHA…ALSG), and 435–472 (VNGI…RVFA).

This sequence belongs to the WD repeat LIS1/nudF family. In terms of assembly, self-associates. Interacts with NDL1 and dynein.

It localises to the cytoplasm. The protein resides in the cytoskeleton. The protein localises to the spindle pole. Positively regulates the activity of the minus-end directed microtubule motor protein dynein. May enhance dynein-mediated microtubule sliding by targeting dynein to the microtubule plus end. Required for nuclear migration during vegetative growth as well as development. Required for retrograde early endosome (EE) transport from the hyphal tip. Required for localization of dynein to the mitotic spindle poles. Recruits additional proteins to the dynein complex at SPBs. The chain is Nuclear distribution protein PAC1 from Ajellomyces dermatitidis (strain ER-3 / ATCC MYA-2586) (Blastomyces dermatitidis).